We begin with the raw amino-acid sequence, 253 residues long: Sec-independent protein translocase protein TatC (253 aa).

6 helical membrane-spanning segments follow: residues 18–38 (VSVG…KSIF), 69–89 (AIVI…APGL), 96–116 (VILP…AFSY), 151–171 (LILG…LAKV), 187–207 (IVVI…SQIF), and 208–228 (MALP…MVNP). The segment at 231-253 (KDNENNNENNNENNTKENTKSES) is disordered. Over residues 244–253 (NTKENTKSES) the composition is skewed to basic and acidic residues.

It belongs to the TatC family. The Tat system comprises two distinct complexes: a TatABC complex, containing multiple copies of TatA, TatB and TatC subunits, and a separate TatA complex, containing only TatA subunits. Substrates initially bind to the TatABC complex, which probably triggers association of the separate TatA complex to form the active translocon.

The protein localises to the cell inner membrane. Functionally, part of the twin-arginine translocation (Tat) system that transports large folded proteins containing a characteristic twin-arginine motif in their signal peptide across membranes. Together with TatB, TatC is part of a receptor directly interacting with Tat signal peptides. The polypeptide is Sec-independent protein translocase protein TatC (Helicobacter pylori (strain ATCC 700392 / 26695) (Campylobacter pylori)).